The sequence spans 533 residues: uncharacterized protein (533 aa).

The next 4 membrane-spanning stretches (helical) occupy residues 1 to 21 (MLAF…VAFI), 135 to 155 (LPRF…IAAL), 193 to 213 (AIAA…AILA), and 472 to 492 (LLVN…PLVG).

The protein localises to the cell membrane. This is an uncharacterized protein from Mycobacterium bovis (strain ATCC BAA-935 / AF2122/97).